The primary structure comprises 148 residues: Transcriptional repressor NrdR (148 aa).

The disordered stretch occupies residues 1-22; it reads MKCPYCSAPDSKVVNSRPSDDG. The segment at 3–34 is a zinc-finger region; that stretch reads CPYCSAPDSKVVNSRPSDDGASIRRRRECLNC. The 88-residue stretch at 49 to 136 folds into the ATP-cone domain; it reads LMVVKRSGPR…VYRDFDSLER (88 aa).

Belongs to the NrdR family. The cofactor is Zn(2+).

Its function is as follows. Negatively regulates transcription of bacterial ribonucleotide reductase nrd genes and operons by binding to NrdR-boxes. This chain is Transcriptional repressor NrdR, found in Deinococcus deserti (strain DSM 17065 / CIP 109153 / LMG 22923 / VCD115).